The primary structure comprises 436 residues: MEHVFAVDEIPDPLWAPPPPVQPAAAAGVDDVGAVSGGGLLERCPSGWNLERFLEELDGVPAPAASPDGAAIYPSPMPAAAAEAAARWSRGYGDREAVGVMPMPAAALPAAPASAAMDPVEYNAMLKRKLDEDLATVAMWRASGAIHSESPLGNKTSLSIVGSILSSQKCIEGNGILVQTKLSPGPNGGSGPYVNQNTDAHAKQATSGSSREPSPSEDDDMEGDAEAMGNMILDEEDKVKKRKESNRESARRSRSRKAARLKDLEEQVSLLRVENSSLLRRLADANQKYSAAAIDNRVLMADIEALRAKVRMAEESVKMVTGARQLHQAIPDMQSPLNVNSDASVPIQNNNPMNYFSNANNAGVNSFMHQVSPAFQIVDSVEKIDPTDPVQLQQQQMASLQHLQNRACGGGASSNEYTAWGSSLMDANELVNMELQ.

The tract at residues 1–27 (MEHVFAVDEIPDPLWAPPPPVQPAAAA) is required for transactivation activity. Residues 182–258 (LSPGPNGGSG…SARRSRSRKA (77 aa)) form a disordered region. A compositionally biased stretch (acidic residues) spans 215–225 (PSEDDDMEGDA). Residues 236 to 299 (EDKVKKRKES…SAAAIDNRVL (64 aa)) form the bZIP domain. A basic motif region spans residues 238 to 257 (KVKKRKESNRESARRSRSRK). Positions 264–278 (LEEQVSLLRVENSSL) are leucine-zipper.

As to quaternary structure, homodimer. Forms heterodimers with RISBZ2/BZP33 and RISBZ3/BZP20. Interacts with DOF3/RPBF. As to expression, specifically expressed in seeds. Expressed in aleurone and subaleurone layers of maturing seeds, but not in the embryo tissues.

The protein resides in the nucleus. Its function is as follows. Transcriptional activator that binds to the DNA specific sequence 5'-TGAGTCA-3' found in seed storage protein gene promoters. Involved in the endosperm-specific regulation of storage protein genes. Can activate the expression of genes encoding for the seed storage proteins glutelin, prolamin, globulin and the allergen RAG1. Functions synergistically with DOF3/RPBF to positively regulate quantitatively many seed storage protein genes. Functions synergistically with DOF3/RPBF to positively regulate some metabolic enzymes, such as alanine aminotransferase and pyruvate phosphate dikinase, that are expressed in developing seeds. Functions synergistically with DOF3/RPBF to positively regulate genes that are key players in the development of aleurone layers. Functions synergistically with DOF3/RPBF to positively regulate the glutelin GLUD-1 gene in endosperm of developing seeds. Can activate the expression of the bifunctional lysine-degrading enzyme, lysine ketoglutarate reductase/saccharopine dehydrogenase (LKR/SDH), one of the key regulators determining free lysine content in plants. Functions as a key regulator of starch synthesis in seeds, by direct binding to the promoters of starch-synthesizing genes, such as AGPL3, WAXXY and SBE1. The polypeptide is bZIP transcription factor RISBZ1 (Oryza sativa subsp. japonica (Rice)).